The sequence spans 375 residues: Putative F-box only protein 11 (375 aa).

The F-box domain occupies 1–46; the sequence is MVSVNLPWELVEEILCRVPPQSLVKFRTVCKQWNSLFDDNKFVNDH.

The sequence is that of Putative F-box only protein 11 (FBX11) from Arabidopsis thaliana (Mouse-ear cress).